The chain runs to 388 residues: Succinate--CoA ligase [ADP-forming] subunit beta (388 aa).

The 236-residue stretch at 9–244 (KSLFAEYGLP…PSQDDAREAH (236 aa)) folds into the ATP-grasp domain. Residues Lys-46, 53-55 (GRG), Glu-99, Thr-102, and Glu-107 each bind ATP. Residues Asn-199 and Asp-213 each contribute to the Mg(2+) site. Substrate is bound by residues Asn-264 and 321–323 (GIV).

Belongs to the succinate/malate CoA ligase beta subunit family. In terms of assembly, heterotetramer of two alpha and two beta subunits. Mg(2+) is required as a cofactor.

The enzyme catalyses succinate + ATP + CoA = succinyl-CoA + ADP + phosphate. The catalysed reaction is GTP + succinate + CoA = succinyl-CoA + GDP + phosphate. Its pathway is carbohydrate metabolism; tricarboxylic acid cycle; succinate from succinyl-CoA (ligase route): step 1/1. In terms of biological role, succinyl-CoA synthetase functions in the citric acid cycle (TCA), coupling the hydrolysis of succinyl-CoA to the synthesis of either ATP or GTP and thus represents the only step of substrate-level phosphorylation in the TCA. The beta subunit provides nucleotide specificity of the enzyme and binds the substrate succinate, while the binding sites for coenzyme A and phosphate are found in the alpha subunit. This chain is Succinate--CoA ligase [ADP-forming] subunit beta, found in Shewanella sp. (strain MR-4).